Reading from the N-terminus, the 304-residue chain is Probable WRKY transcription factor 29 (304 aa).

Disordered stretches follow at residues 76–96 and 185–236; these read LPEDSKPFRDDKKQRSHGCLL and YTNE…IPSA. Residues 78-88 show a composition bias toward basic and acidic residues; the sequence is EDSKPFRDDKK. A DNA-binding region (WRKY) is located at residues 128–194; sequence KEENLLSDAW…YTNEHNHELP (67 aa). 2 stretches are compositionally biased toward polar residues: residues 196–213 and 225–236; these read RRNSLAGSTRAKTSQPKP and SSPTSNPMIPSA.

The protein belongs to the WRKY group II-e family.

It is found in the nucleus. In terms of biological role, transcription factor involved in the expression of defense genes in innate immune response of plants. Interacts specifically with the W box (5'-(T)TGAC[CT]-3'), a frequently occurring elicitor-responsive cis-acting element. Activates WRKY 22, SIRK and its own promoters. This chain is Probable WRKY transcription factor 29 (WRKY29), found in Arabidopsis thaliana (Mouse-ear cress).